The chain runs to 425 residues: Orexin/Hypocretin receptor type 1 (425 aa).

The interval 1–25 (MEPSATPGPQMGVPTEGRERSPEPP) is disordered. The Extracellular portion of the chain corresponds to 1-46 (MEPSATPGPQMGVPTEGRERSPEPPDYEDEFLRYLWRDYLYPKQYE). The tract at residues 26–41 (DYEDEFLRYLWRDYLY) is required for response to orexin-A. Residues 47–67 (WVLIAAYVAVFFVALVGNTLV) traverse the membrane as a helical segment. Over 68–82 (CLAVWRNHHMRTVTN) the chain is Cytoplasmic. Residues 83-105 (YFIVNLSLADVLVTAICLPASLL) traverse the membrane as a helical segment. Residues 106 to 119 (VDITESWLFGHALC) lie on the Extracellular side of the membrane. Cysteine 119 and cysteine 202 are joined by a disulfide. Residues 120-140 (KVIPYLQAVSVSVAVLTLSFI) traverse the membrane as a helical segment. Residues 141–160 (ALDRWYAICHPLLFKSTARR) are Cytoplasmic-facing. A helical membrane pass occupies residues 161–182 (ARGSILGIWAVSLAVMVPQAAV). The Extracellular portion of the chain corresponds to 183-213 (MECSSVLPELANRTRLFSVCDERWADDLYPK). Residue asparagine 194 is glycosylated (N-linked (GlcNAc...) asparagine). Residues 214–235 (IYHSCFFIVTYLAPLGLMAMAY) form a helical membrane-spanning segment. The Cytoplasmic segment spans residues 236 to 298 (FQIFRKLWGR…QMRARRKTAK (63 aa)). A helical transmembrane segment spans residues 299-321 (MLMVVLLVFALCYLPISVLNVLK). Residues 322 to 336 (RVFGMFRQASDREAV) are Extracellular-facing. A helical transmembrane segment spans residues 337 to 360 (YACFTFSHWLVYANSAANPIIYNF). The Cytoplasmic portion of the chain corresponds to 361-425 (LSGKFREQFK…LLTSVTTVLP (65 aa)).

Belongs to the G-protein coupled receptor 1 family.

It is found in the cell membrane. Its function is as follows. Moderately selective excitatory receptor for orexin-A and, with a lower affinity, for orexin-B neuropeptide. Triggers an increase in cytoplasmic Ca(2+) levels in response to orexin-A binding. This Bos taurus (Bovine) protein is Orexin/Hypocretin receptor type 1.